The primary structure comprises 361 residues: UDP-D-xylose:L-fucose alpha-1,3-D-xylosyltransferase 1 (361 aa).

The tract at residues 1–21 (MEQKQHILKQSTFSSSPSSYS) is disordered. The Cytoplasmic segment spans residues 1–34 (MEQKQHILKQSTFSSSPSSYSSISDRPISLLSRN). Residues 11-21 (STFSSSPSSYS) are compositionally biased toward low complexity. The chain crosses the membrane as a helical; Signal-anchor for type II membrane protein span at residues 35 to 55 (GLLLLLLALVLLLGVLLPWPG). Residues 56-361 (SPLFLFPNRL…ALESPLGKLE (306 aa)) are Lumenal-facing. 2 N-linked (GlcNAc...) asparagine glycosylation sites follow: Asn92 and Asn167. The DXD motif motif lies at 190–192 (DVD). 2 N-linked (GlcNAc...) asparagine glycosylation sites follow: Asn222 and Asn286.

Belongs to the glycosyltransferase 77 family. It depends on Mn(2+) as a cofactor. Mg(2+) is required as a cofactor. Post-translationally, glycosylated. In terms of tissue distribution, expressed in roots, rosette leaves, cauline leaves and stems.

The protein localises to the golgi apparatus membrane. Functionally, catalyzes the transfer of D-xylose from UDP-alpha-D-xylose onto L-fucose. Probably involved in the biosynthesis of rhamnogalacturonan II (RG-II) through xylosylation of the internal fucose moiety of the A-chain of RG-II, a structurally complex pectic polysaccharide of the primary cell wall. RG-II is essential for the cell wall integrity of rapidly growing tissues such as roots and pollen tube growth and elongation. This is UDP-D-xylose:L-fucose alpha-1,3-D-xylosyltransferase 1 from Arabidopsis thaliana (Mouse-ear cress).